Consider the following 490-residue polypeptide: Kinetochore protein Nuf2 homolog (490 aa).

2 coiled-coil regions span residues 146–280 and 310–407; these read DRKF…KLEA and DLID…SETI. Disordered stretches follow at residues 346–365 and 468–490; these read QSET…EERQ and IDAG…SVFK.

It belongs to the NUF2 family. Component of the NDC80 complex, which is composed of at least ndc-80 and him-10. The NDC80 complex interacts with knl-1.

Its subcellular location is the nucleus. It is found in the chromosome. It localises to the centromere. The protein resides in the kinetochore. Acts as a component of the essential kinetochore-associated NDC80 complex, which is required for chromosome segregation in mitosis and meiosis and spindle checkpoint activity. The ndc-80 complex synergistically enhances the affinity of the ska-1 complex for microtubules and may allow the ndc-80 complex to track depolymerizing microtubules. The chain is Kinetochore protein Nuf2 homolog (him-10) from Caenorhabditis elegans.